A 359-amino-acid chain; its full sequence is Mineralocorticoid receptor (359 aa).

Residues 1-49 (FKRAVEGQHNYLCAGRNDCIIDKIRRKNCPACRVRKCLQAGMNLGARKS) constitute a DNA-binding region (nuclear receptor). Cysteine 13, cysteine 19, cysteine 29, and cysteine 32 together coordinate Zn(2+). The segment at 13–37 (CAGRNDCIIDKIRRKNCPACRVRKC) adopts an NR C4-type zinc-finger fold. Residues 48–96 (KSKKPGKLKGVNEDSTPTKEGGQTCPGSGGGYLSSGEKELSTSPTNALV) form a disordered region. The tract at residues 50 to 107 (KKPGKLKGVNEDSTPTKEGGQTCPGSGGGYLSSGEKELSTSPTNALVPHGPGGGLVTP) is hinge. An NR LBD domain is found at 108–339 (YLPPSICSVL…EFPEMLVEII (232 aa)). 21-hydroxyprogesterone is bound by residues asparagine 145 and glutamine 151. Asparagine 145 and glutamine 151 together coordinate aldosterone. 2 residues coordinate progesterone: asparagine 145 and glutamine 151. An important for coactivator binding region spans residues 157–160 (KWAK). The 21-hydroxyprogesterone site is built by arginine 192 and threonine 320. Arginine 192 and threonine 320 together coordinate aldosterone. Residues arginine 192 and threonine 320 each contribute to the progesterone site.

It belongs to the nuclear hormone receptor family. NR3 subfamily.

It localises to the cytoplasm. It is found in the nucleus. Functionally, receptor for both mineralocorticoids (MC) such as cortisol. Binds to mineralocorticoid response elements (MRE) and transactivates target genes. The effect of MC is to increase ion and water transport and thus raise extracellular fluid volume and blood pressure and lower potassium levels. The polypeptide is Mineralocorticoid receptor (nr3c2) (Oncorhynchus mykiss (Rainbow trout)).